Reading from the N-terminus, the 210-residue chain is Cdc42 effector protein 2 (210 aa).

Serine 2 bears the N-acetylserine mark. One can recognise a CRIB domain in the interval 30-44; sequence ISPPLGDFRHTIHIG. Serine 31, serine 101, and serine 141 each carry phosphoserine. The segment at 124 to 145 is disordered; it reads AQAPPKPPRLHLETPQASPQEA.

Belongs to the BORG/CEP family. Interacts with CDC42 and RHOQ, in a GTP-dependent manner, and with SEPT7.

The protein resides in the endomembrane system. It is found in the cytoplasm. Its subcellular location is the cytoskeleton. Its function is as follows. Probably involved in the organization of the actin cytoskeleton. May act downstream of CDC42 to induce actin filament assembly leading to cell shape changes. Induces pseudopodia formation in fibroblasts in a CDC42-dependent manner. The protein is Cdc42 effector protein 2 (CDC42EP2) of Bos taurus (Bovine).